We begin with the raw amino-acid sequence, 106 residues long: Large ribosomal subunit protein eL42 (106 aa).

Belongs to the eukaryotic ribosomal protein eL42 family.

The polypeptide is Large ribosomal subunit protein eL42 (RPL44) (Yarrowia lipolytica (strain CLIB 122 / E 150) (Yeast)).